The chain runs to 254 residues: Persulfide dioxygenase ETHE1, mitochondrial (254 aa).

A mitochondrion-targeting transit peptide spans 1-7; that stretch reads MASAVVR. Residues serine 14, serine 17, and serine 19 each carry the phosphoserine modification. Lysine 32 bears the N6-acetyllysine; alternate mark. Lysine 32 carries the post-translational modification N6-succinyllysine; alternate. At lysine 66 the chain carries N6-acetyllysine. Residues histidine 79, histidine 135, and aspartate 154 each contribute to the Fe cation site. The residue at position 172 (lysine 172) is an N6-acetyllysine; alternate. N6-succinyllysine; alternate is present on lysine 172.

It belongs to the metallo-beta-lactamase superfamily. Glyoxalase II family. As to quaternary structure, homodimer. Monomer. Interacts with TST. May interact with RELA. The cofactor is Fe(2+).

The protein localises to the cytoplasm. It localises to the nucleus. It is found in the mitochondrion matrix. The catalysed reaction is S-sulfanylglutathione + O2 + H2O = sulfite + glutathione + 2 H(+). Functionally, first described as a protein that can shuttle between the nucleus and the cytoplasm and suppress p53-induced apoptosis by sequestering the transcription factor RELA/NFKB3 in the cytoplasm and preventing its accumulation in the nucleus. Sulfur dioxygenase that plays an essential role in hydrogen sulfide catabolism in the mitochondrial matrix. Hydrogen sulfide (H(2)S) is first oxidized by SQRDL, giving rise to cysteine persulfide residues. ETHE1 consumes molecular oxygen to catalyze the oxidation of the persulfide, once it has been transferred to a thiophilic acceptor, such as glutathione (R-SSH). Plays an important role in metabolic homeostasis in mitochondria by metabolizing hydrogen sulfide and preventing the accumulation of supraphysiological H(2)S levels that have toxic effects, due to the inhibition of cytochrome c oxidase. The polypeptide is Persulfide dioxygenase ETHE1, mitochondrial (Ethe1) (Mus musculus (Mouse)).